The chain runs to 307 residues: MTDSTYDVARVRTYLQGLQTRIADALGALDGTPLATDIWQRGPAERLRGGGCTRILEGGRVFERAGIGFSDVAGDALPPSASAARPQLAGRGFEALGVSLVLHPRNPYCPTVHMNVRMLIATKPGEAPIFWFGGGMDLTPVYGFEDDARHFHRTCKDALDPFGAELYPRFKKWCDEYFFLKHRNEMRGVGGIFFDDFSEPGFERSFEMMQSVGDAFLPAYLPIVERRAALPYGERERDFQAYRRGRYVEFNLVFDRGTLFGLQSGGRTESILMSMPPVANWRYNWQPEPGSPEARLYSDFIVPRDWV.

Residue Ser99 participates in substrate binding. A divalent metal cation is bound by residues His103 and His113. The active-site Proton donor is His113. 115-117 serves as a coordination point for substrate; the sequence is NVR. A divalent metal cation-binding residues include His152 and His182. An important for dimerization region spans residues 247-282; it reads YVEFNLVFDRGTLFGLQSGGRTESILMSMPPVANWR. 265 to 267 contacts substrate; the sequence is GGR.

The protein belongs to the aerobic coproporphyrinogen-III oxidase family. As to quaternary structure, homodimer. The cofactor is a divalent metal cation.

The protein localises to the cytoplasm. The catalysed reaction is coproporphyrinogen III + O2 + 2 H(+) = protoporphyrinogen IX + 2 CO2 + 2 H2O. It participates in porphyrin-containing compound metabolism; protoporphyrin-IX biosynthesis; protoporphyrinogen-IX from coproporphyrinogen-III (O2 route): step 1/1. Its function is as follows. Involved in the heme biosynthesis. Catalyzes the aerobic oxidative decarboxylation of propionate groups of rings A and B of coproporphyrinogen-III to yield the vinyl groups in protoporphyrinogen-IX. This chain is Oxygen-dependent coproporphyrinogen-III oxidase, found in Burkholderia multivorans (strain ATCC 17616 / 249).